Here is a 284-residue protein sequence, read N- to C-terminus: Tropomyosin-1 (284 aa).

Disordered stretches follow at residues 1 to 26 and 96 to 124; these read MDAI…DTCE and EEDL…DENN. A coiled-coil region spans residues 1–276; sequence MDAIKKKMQA…YKSLADEMDS (276 aa). Residues 12–26 show a composition bias toward basic and acidic residues; it reads KLEKDNAMDKADTCE. A compositionally biased stretch (polar residues) spans 107 to 121; sequence GTAQQKLLEAQQSAD.

This sequence belongs to the tropomyosin family. In terms of assembly, homodimer.

Functionally, tropomyosin, in association with the troponin complex, plays a central role in the calcium dependent regulation of muscle contraction. This chain is Tropomyosin-1, found in Bombyx mori (Silk moth).